The primary structure comprises 344 residues: Arginine N-succinyltransferase (344 aa).

Leu125 is a succinyl-CoA binding site. His229 acts as the Proton donor in catalysis.

This sequence belongs to the arginine N-succinyltransferase family.

The catalysed reaction is succinyl-CoA + L-arginine = N(2)-succinyl-L-arginine + CoA + H(+). It participates in amino-acid degradation; L-arginine degradation via AST pathway; L-glutamate and succinate from L-arginine: step 1/5. In terms of biological role, catalyzes the transfer of succinyl-CoA to arginine to produce N(2)-succinylarginine. The polypeptide is Arginine N-succinyltransferase (Salmonella agona (strain SL483)).